The following is a 469-amino-acid chain: ATP synthase subunit beta (469 aa).

Residue 156–163 (GGAGVGKT) coordinates ATP.

It belongs to the ATPase alpha/beta chains family. As to quaternary structure, F-type ATPases have 2 components, CF(1) - the catalytic core - and CF(0) - the membrane proton channel. CF(1) has five subunits: alpha(3), beta(3), gamma(1), delta(1), epsilon(1). CF(0) has three main subunits: a(1), b(2) and c(9-12). The alpha and beta chains form an alternating ring which encloses part of the gamma chain. CF(1) is attached to CF(0) by a central stalk formed by the gamma and epsilon chains, while a peripheral stalk is formed by the delta and b chains.

The protein localises to the cell membrane. The catalysed reaction is ATP + H2O + 4 H(+)(in) = ADP + phosphate + 5 H(+)(out). In terms of biological role, produces ATP from ADP in the presence of a proton gradient across the membrane. The catalytic sites are hosted primarily by the beta subunits. In Bacillus cereus (strain AH820), this protein is ATP synthase subunit beta.